We begin with the raw amino-acid sequence, 304 residues long: Protease HtpX homolog (304 aa).

The next 2 membrane-spanning stretches (helical) occupy residues 14-34 (IFII…IGII) and 39-59 (YLNG…IMVM). H144 is a binding site for Zn(2+). The active site involves E145. H148 provides a ligand contact to Zn(2+). Transmembrane regions (helical) follow at residues 159–179 (IAIA…RMIF) and 202–222 (AIIY…ATAI). E231 contributes to the Zn(2+) binding site.

The protein belongs to the peptidase M48B family. It depends on Zn(2+) as a cofactor.

Its subcellular location is the cell membrane. This Listeria monocytogenes serotype 4b (strain CLIP80459) protein is Protease HtpX homolog.